Consider the following 624-residue polypeptide: Alpha-galactosidase 3 (624 aa).

A signal peptide spans Met-1–Gly-22. 5 N-linked (GlcNAc...) asparagine glycosylation sites follow: Asn-37, Asn-56, Asn-197, Asn-259, and Asn-293. Asp-347 acts as the Nucleophile in catalysis. Asn-393 carries N-linked (GlcNAc...) asparagine glycosylation. Asp-412 acts as the Proton donor in catalysis. N-linked (GlcNAc...) asparagine glycosylation is present at Asn-469.

It belongs to the glycosyl hydrolase 27 family.

Its subcellular location is the secreted. The enzyme catalyses Hydrolysis of terminal, non-reducing alpha-D-galactose residues in alpha-D-galactosides, including galactose oligosaccharides, galactomannans and galactolipids.. Alpha-galactosidase involved in the degradation of simple oligosaccharides like melibiose, raffinose and stachyose, and of polymeric galacto(gluco)mannans. The protein is Alpha-galactosidase 3 (agl3) of Hypocrea jecorina (Trichoderma reesei).